We begin with the raw amino-acid sequence, 1325 residues long: Nucleoporin nup146 (1325 aa).

Disordered regions lie at residues methionine 1–serine 20, valine 453–asparagine 474, glycine 758–histidine 951, and phenylalanine 973–leucine 994. The span at glutamine 763–leucine 778 shows a compositional bias: polar residues. A compositionally biased stretch (basic and acidic residues) spans serine 779–glutamate 791. Residues threonine 792 to lysine 801 are compositionally biased toward polar residues. Basic and acidic residues predominate over residues glutamine 802–glycine 811. 2 stretches are compositionally biased toward polar residues: residues alanine 816–serine 835 and phenylalanine 850–phenylalanine 861. The segment covering leucine 867–aspartate 881 has biased composition (basic and acidic residues). At threonine 899 the chain carries Phosphothreonine. Residues serine 927–serine 937 are compositionally biased toward acidic residues. Residue threonine 946 is modified to Phosphothreonine. A phosphoserine mark is found at serine 1041, serine 1043, and serine 1044.

The protein resides in the cytoplasm. It is found in the nucleus. In terms of biological role, functions as a component of the nuclear pore complex (NPC). NPC components, collectively referred to as nucleoporins (NUPs), can play the role of both NPC structural components and of docking or interaction partners for transiently associated nuclear transport factors. Active directional transport is assured by both, a Phe-Gly (FG) repeat affinity gradient for these transport factors across the NPC and a transport cofactor concentration gradient across the nuclear envelope. The protein is Nucleoporin nup146 (nup146) of Schizosaccharomyces pombe (strain 972 / ATCC 24843) (Fission yeast).